The chain runs to 1364 residues: Serine protease SepA autotransporter (1364 aa).

The signal sequence occupies residues 1-56 (MNKIYYLKYCHITKSLIAVSELARRVTCKSHRRLSRRVILTSVAALSLSSAWPALS). In terms of domain architecture, Peptidase S6 spans 57-307 (ATVSAEIPYQ…VVTTQDFLGQ (251 aa)). Residues His-134, Asp-162, and Ser-267 each act as charge relay system in the active site. Residues 1098–1364 (DTQGDAGVWA…AINANFRYVF (267 aa)) enclose the Autotransporter domain.

Cleaved to release the mature protein from the outer membrane. Cleavage is performed by an unknown protease.

It is found in the periplasm. The protein resides in the secreted. It localises to the cell surface. The protein localises to the cell outer membrane. Inhibited by the serine protease inhibitor PMSF, but not by benzamidine, alpha 1-antitrypsin, alpha 1-antichymotrypsin. Not inhibited by metalloprotease inhibitors such as EDTA and orthophenanthroline. In terms of biological role, major protein secreted in laboratory media showing proteolytic activity. May be involved in invasion and destruction of host intestinal epithelium. This chain is Serine protease SepA autotransporter (sepA), found in Shigella flexneri.